The following is a 515-amino-acid chain: Bifunctional purine biosynthesis protein PurH (515 aa).

In terms of domain architecture, MGS-like spans 1-145 (MTKRALISVS…KNHASVTVVV (145 aa)).

The protein belongs to the PurH family.

The enzyme catalyses (6R)-10-formyltetrahydrofolate + 5-amino-1-(5-phospho-beta-D-ribosyl)imidazole-4-carboxamide = 5-formamido-1-(5-phospho-D-ribosyl)imidazole-4-carboxamide + (6S)-5,6,7,8-tetrahydrofolate. It catalyses the reaction IMP + H2O = 5-formamido-1-(5-phospho-D-ribosyl)imidazole-4-carboxamide. It participates in purine metabolism; IMP biosynthesis via de novo pathway; 5-formamido-1-(5-phospho-D-ribosyl)imidazole-4-carboxamide from 5-amino-1-(5-phospho-D-ribosyl)imidazole-4-carboxamide (10-formyl THF route): step 1/1. Its pathway is purine metabolism; IMP biosynthesis via de novo pathway; IMP from 5-formamido-1-(5-phospho-D-ribosyl)imidazole-4-carboxamide: step 1/1. The polypeptide is Bifunctional purine biosynthesis protein PurH (Streptococcus equi subsp. equi (strain 4047)).